The primary structure comprises 131 residues: Profilin-1 (131 aa).

The cysteines at positions 13 and 115 are disulfide-linked. The Involved in PIP2 interaction motif lies at 81-97; it reads AVIRGKKGSGGITVKKT. Phosphothreonine is present on Thr-111.

This sequence belongs to the profilin family. Multimer. Occurs in many kinds of cells as a complex with monomeric actin in a 1:1 ratio. Phosphorylated by MAP kinases. In terms of tissue distribution, pollen specific.

It is found in the cytoplasm. The protein resides in the cytoskeleton. Functionally, binds to actin and affects the structure of the cytoskeleton. At high concentrations, profilin prevents the polymerization of actin, whereas it enhances it at low concentrations. By binding to PIP2, it inhibits the formation of IP3 and DG. The sequence is that of Profilin-1 (PRO1) from Zea mays (Maize).